Reading from the N-terminus, the 417-residue chain is Adrenocortical dysplasia protein homolog (417 aa).

Residues 11–13 (PWI) carry the PWI motif. Ser25 is subject to Phosphoserine. Positions 156 to 245 (ESASSSAGLT…SSIDSSQKAQ (90 aa)) are interaction with POT1. 2 stretches are compositionally biased toward polar residues: residues 237–250 (SIDS…NPAS) and 259–292 (SGAS…TSPR). Positions 237–309 (SIDSSQKAQE…PCSSTPSSPL (73 aa)) are disordered. Residues 296 to 309 (PSSTPCSSTPSSPL) show a composition bias toward low complexity. A phosphoserine mark is found at Ser313 and Ser317. Lys348 is covalently cross-linked (Glycyl lysine isopeptide (Lys-Gly) (interchain with G-Cter in SUMO2)).

As to quaternary structure, component of the shelterin complex (telosome) composed of TERF1, TERF2, TINF2, TERF2IP ACD and POT1. Forms heterodimers with POT1. Identified in a complex with POT1 and single-stranded telomeric DNA. Interacts with STN1 and TINF2.

It is found in the nucleus. The protein localises to the chromosome. The protein resides in the telomere. In terms of biological role, component of the shelterin complex (telosome) that is involved in the regulation of telomere length and protection. Shelterin associates with arrays of double-stranded TTAGGG repeats added by telomerase and protects chromosome ends. Without its protective activity, telomeres are no longer hidden from the DNA damage surveillance and chromosome ends are inappropriately processed by DNA repair pathways. Promotes binding of POT1 to single-stranded telomeric DNA. Modulates the inhibitory effects of POT1 on telomere elongation. The ACD-POT1 heterodimer enhances telomere elongation by recruiting telomerase to telomeres and increasing its processivity. May play a role in organogenesis. The sequence is that of Adrenocortical dysplasia protein homolog from Rattus norvegicus (Rat).